Consider the following 324-residue polypeptide: tRNA-dihydrouridine(20a/20b) synthase [NAD(P)+]-like (324 aa).

FMN is bound by residues 33 to 35 (PMV) and Q87. C116 (proton donor) is an active-site residue. FMN is bound by residues K158, H186, 216 to 218 (NGD), and 240 to 241 (AR).

Belongs to the Dus family. Dus4 subfamily. Requires FMN as cofactor.

It catalyses the reaction 5,6-dihydrouridine(20a) in tRNA + NADP(+) = uridine(20a) in tRNA + NADPH + H(+). It carries out the reaction 5,6-dihydrouridine(20a) in tRNA + NAD(+) = uridine(20a) in tRNA + NADH + H(+). The enzyme catalyses 5,6-dihydrouridine(20b) in tRNA + NAD(+) = uridine(20b) in tRNA + NADH + H(+). The catalysed reaction is 5,6-dihydrouridine(20b) in tRNA + NADP(+) = uridine(20b) in tRNA + NADPH + H(+). Its function is as follows. Catalyzes the synthesis of dihydrouridine, a modified base found in the D-loop of most tRNAs. This Mus musculus (Mouse) protein is tRNA-dihydrouridine(20a/20b) synthase [NAD(P)+]-like (Dus4l).